Consider the following 634-residue polypeptide: MQLLLIHSDYIEYETKKQTPVAEKIEESLKSGRLEEALTAFTAVESVDEANPEEAIKKAVSEIEKVAAQVKTNRIMLYPYAHLSSDLSSPKVAVQVLKGMEAALSSRYEVKRAPFGWYKAFTVSCKGHPLSELSRSIRPEGAAKAEVKTETCEKEEVVSEALKAEGTARSYWRILTPDGELHEVEGFDLTPYPKLQQFVNYEISKSRAVERAPPHVELMRRLELADYEPGSDSGNMRYYPKGRLVKSLLENYVLDVATEFGAMEVETPLMYDMNHPTLKKYLDRFPARQYSIESDKRHMFLRFAACFGQFLMNHDMTISYKNLPLRMIEMTRYSFRKEQRGELVGLRRLRAFTMPDMHTLCEDMDQAVNQFKEQYDLCISVLENVGIHINDYEVAIRFTRDFYEANKDLVVNMAKTVNKPVLVEMWDTRFFYFVLKFEFNFVDALAKASALSTVQIDVENAERYDISYVNADGKLERPTVLHCSPSGAIERCIYALLEKAAMETEEGKVPMLPVWLSPTQVRIVPISEKHIAFAEEVAKKLDFRVDVDDRDLSIGKKVREAGREWVPYVVVIGDKEMEESTINVTIREESGQDKPKKVQMTPEELNARIKEETSGKPYRKLPLAKYLSARPKFL.

The segment at 1-142 (MQLLLIHSDY…LSRSIRPEGA (142 aa)) is editing domain. Positions 214–513 (PHVELMRRLE…TEEGKVPMLP (300 aa)) are catalytic. Zn(2+) is bound by residues cysteine 306, histidine 358, and histidine 482.

This sequence belongs to the class-II aminoacyl-tRNA synthetase family. In terms of assembly, homodimer. The cofactor is Zn(2+).

The protein localises to the cytoplasm. The catalysed reaction is tRNA(Thr) + L-threonine + ATP = L-threonyl-tRNA(Thr) + AMP + diphosphate + H(+). Catalyzes the attachment of threonine to tRNA(Thr) in a two-step reaction: L-threonine is first activated by ATP to form Thr-AMP and then transferred to the acceptor end of tRNA(Thr). Edits incorrectly charged L-seryl-tRNA(Thr) probably via its editing domain (tested with total bovine tRNA). Activates L-serine, but does not detectably transfer it to tRNA (tested with total bovine tRNA). This is Threonine--tRNA ligase from Methanosarcina mazei (strain ATCC BAA-159 / DSM 3647 / Goe1 / Go1 / JCM 11833 / OCM 88) (Methanosarcina frisia).